A 166-amino-acid polypeptide reads, in one-letter code: Large ribosomal subunit protein uL10 (166 aa).

Belongs to the universal ribosomal protein uL10 family. Part of the ribosomal stalk of the 50S ribosomal subunit. The N-terminus interacts with L11 and the large rRNA to form the base of the stalk. The C-terminus forms an elongated spine to which L12 dimers bind in a sequential fashion forming a multimeric L10(L12)X complex.

Its function is as follows. Forms part of the ribosomal stalk, playing a central role in the interaction of the ribosome with GTP-bound translation factors. This chain is Large ribosomal subunit protein uL10, found in Streptococcus gordonii (strain Challis / ATCC 35105 / BCRC 15272 / CH1 / DL1 / V288).